Here is an 88-residue protein sequence, read N- to C-terminus: HssA/B-like protein 61 (88 aa).

This sequence belongs to the hssA/B family.

This is HssA/B-like protein 61 (hssl61) from Dictyostelium discoideum (Social amoeba).